A 197-amino-acid polypeptide reads, in one-letter code: Crossover junction endodeoxyribonuclease RuvC (197 aa).

Catalysis depends on residues aspartate 7, glutamate 68, and aspartate 141. Positions 7, 68, and 141 each coordinate Mg(2+). Composition is skewed to low complexity over residues 165–181 (AAPA…TPAR) and 188–197 (APARRPAGAS). Residues 165-197 (AAPAAPVSRPAPATPARRSPRPAAPARRPAGAS) are disordered.

It belongs to the RuvC family. In terms of assembly, homodimer which binds Holliday junction (HJ) DNA. The HJ becomes 2-fold symmetrical on binding to RuvC with unstacked arms; it has a different conformation from HJ DNA in complex with RuvA. In the full resolvosome a probable DNA-RuvA(4)-RuvB(12)-RuvC(2) complex forms which resolves the HJ. The cofactor is Mg(2+).

Its subcellular location is the cytoplasm. It catalyses the reaction Endonucleolytic cleavage at a junction such as a reciprocal single-stranded crossover between two homologous DNA duplexes (Holliday junction).. In terms of biological role, the RuvA-RuvB-RuvC complex processes Holliday junction (HJ) DNA during genetic recombination and DNA repair. Endonuclease that resolves HJ intermediates. Cleaves cruciform DNA by making single-stranded nicks across the HJ at symmetrical positions within the homologous arms, yielding a 5'-phosphate and a 3'-hydroxyl group; requires a central core of homology in the junction. The consensus cleavage sequence is 5'-(A/T)TT(C/G)-3'. Cleavage occurs on the 3'-side of the TT dinucleotide at the point of strand exchange. HJ branch migration catalyzed by RuvA-RuvB allows RuvC to scan DNA until it finds its consensus sequence, where it cleaves and resolves the cruciform DNA. The sequence is that of Crossover junction endodeoxyribonuclease RuvC from Frankia alni (strain DSM 45986 / CECT 9034 / ACN14a).